Here is a 274-residue protein sequence, read N- to C-terminus: Nitrogenase iron protein (274 aa).

An ATP-binding site is contributed by glycine 8–serine 15. Position 94 (cysteine 94) interacts with [4Fe-4S] cluster. Residue arginine 97 is modified to ADP-ribosylarginine; by dinitrogenase reductase ADP-ribosyltransferase. Cysteine 131 is a binding site for [4Fe-4S] cluster.

The protein belongs to the NifH/BchL/ChlL family. Homodimer. Requires [4Fe-4S] cluster as cofactor. In terms of processing, the reversible ADP-ribosylation of Arg-97 inactivates the nitrogenase reductase and regulates nitrogenase activity.

The enzyme catalyses N2 + 8 reduced [2Fe-2S]-[ferredoxin] + 16 ATP + 16 H2O = H2 + 8 oxidized [2Fe-2S]-[ferredoxin] + 2 NH4(+) + 16 ADP + 16 phosphate + 6 H(+). Functionally, the key enzymatic reactions in nitrogen fixation are catalyzed by the nitrogenase complex, which has 2 components: the iron protein and the molybdenum-iron protein. The chain is Nitrogenase iron protein from Pelodictyon phaeoclathratiforme (strain DSM 5477 / BU-1).